Here is a 308-residue protein sequence, read N- to C-terminus: MSKKLTFQEIILTLQQYWNDQGCMLMQAYDNEKGAGTMSPYTFLRAIGPEPWNAAYVEPSRRPADGRYGENPNRLYQHHQFQVVMKPSPSNIQELYLASLEKLGINPLEHDIRFVEDNWENPSTGSAGLGWEVWLDGMEITQFTYFQQVGGLATSPVTAEVTYGLERLASYIQEVDSVYDIEWAPGVKYGEIFLQPEYEHSKYSFEISDQDMLLENFEKFEKEASRALEEGLVHPAYDYVLKCSHTFNLLDARGAVSVTERAGYIARIRNLARVVAKTFVAERKKLGFPLLDEATRAILLAEDANKSI.

It belongs to the class-II aminoacyl-tRNA synthetase family. In terms of assembly, tetramer of two alpha and two beta subunits.

It localises to the cytoplasm. It carries out the reaction tRNA(Gly) + glycine + ATP = glycyl-tRNA(Gly) + AMP + diphosphate. The chain is Glycine--tRNA ligase alpha subunit from Streptococcus pyogenes serotype M3 (strain SSI-1).